The primary structure comprises 149 residues: Transcriptional repressor NrdR (149 aa).

The segment at Cys-3–Cys-34 is a zinc-finger region. The ATP-cone domain occupies Pro-49–Glu-139.

The protein belongs to the NrdR family. It depends on Zn(2+) as a cofactor.

In terms of biological role, negatively regulates transcription of bacterial ribonucleotide reductase nrd genes and operons by binding to NrdR-boxes. This is Transcriptional repressor NrdR from Aeromonas hydrophila subsp. hydrophila (strain ATCC 7966 / DSM 30187 / BCRC 13018 / CCUG 14551 / JCM 1027 / KCTC 2358 / NCIMB 9240 / NCTC 8049).